The following is a 396-amino-acid chain: Tryptophan synthase beta chain (396 aa).

Residue K86 is modified to N6-(pyridoxal phosphate)lysine.

This sequence belongs to the TrpB family. Tetramer of two alpha and two beta chains. The cofactor is pyridoxal 5'-phosphate.

The catalysed reaction is (1S,2R)-1-C-(indol-3-yl)glycerol 3-phosphate + L-serine = D-glyceraldehyde 3-phosphate + L-tryptophan + H2O. Its pathway is amino-acid biosynthesis; L-tryptophan biosynthesis; L-tryptophan from chorismate: step 5/5. Functionally, the beta subunit is responsible for the synthesis of L-tryptophan from indole and L-serine. The sequence is that of Tryptophan synthase beta chain from Pectobacterium atrosepticum (strain SCRI 1043 / ATCC BAA-672) (Erwinia carotovora subsp. atroseptica).